A 42-amino-acid chain; its full sequence is uncharacterized protein (42 aa).

This is an uncharacterized protein from Dictyostelium discoideum (Social amoeba).